A 522-amino-acid polypeptide reads, in one-letter code: Glucose-6-phosphate isomerase (522 aa).

Glu-351 acts as the Proton donor in catalysis. Catalysis depends on residues His-382 and Lys-491.

This sequence belongs to the GPI family.

The protein resides in the cytoplasm. It carries out the reaction alpha-D-glucose 6-phosphate = beta-D-fructose 6-phosphate. Its pathway is carbohydrate biosynthesis; gluconeogenesis. The protein operates within carbohydrate degradation; glycolysis; D-glyceraldehyde 3-phosphate and glycerone phosphate from D-glucose: step 2/4. In terms of biological role, catalyzes the reversible isomerization of glucose-6-phosphate to fructose-6-phosphate. The polypeptide is Glucose-6-phosphate isomerase (Albidiferax ferrireducens (strain ATCC BAA-621 / DSM 15236 / T118) (Rhodoferax ferrireducens)).